A 252-amino-acid polypeptide reads, in one-letter code: Imidazole glycerol phosphate synthase subunit HisF (252 aa).

Active-site residues include aspartate 11 and aspartate 130.

Belongs to the HisA/HisF family. In terms of assembly, heterodimer of HisH and HisF.

The protein localises to the cytoplasm. The enzyme catalyses 5-[(5-phospho-1-deoxy-D-ribulos-1-ylimino)methylamino]-1-(5-phospho-beta-D-ribosyl)imidazole-4-carboxamide + L-glutamine = D-erythro-1-(imidazol-4-yl)glycerol 3-phosphate + 5-amino-1-(5-phospho-beta-D-ribosyl)imidazole-4-carboxamide + L-glutamate + H(+). It functions in the pathway amino-acid biosynthesis; L-histidine biosynthesis; L-histidine from 5-phospho-alpha-D-ribose 1-diphosphate: step 5/9. In terms of biological role, IGPS catalyzes the conversion of PRFAR and glutamine to IGP, AICAR and glutamate. The HisF subunit catalyzes the cyclization activity that produces IGP and AICAR from PRFAR using the ammonia provided by the HisH subunit. This is Imidazole glycerol phosphate synthase subunit HisF from Staphylococcus epidermidis (strain ATCC 35984 / DSM 28319 / BCRC 17069 / CCUG 31568 / BM 3577 / RP62A).